The following is a 479-amino-acid chain: MLWVEKYRPKTLEEVVADKSIITRVIKWAKSWKRGSKPLLLAGPPGVGKTSLALALANTMGWEAVELNASDQRSWRVIERIVGEGAFNETISDEGEFLSSRIGKLKLIILDEVDNIHKKEDVGGEAALIRLIKRKPAQPLILIANDPYKLSPELRNLCEMINFKRLTKQQVARVLERIALKEGIKVDKSVLLKIAENAGGDLRAAINDFQALAEGKEELKPEDVFLTKRTQEKDIFRVMQMIFKTKNPAVYNEAMLLDESPEDVIHWVDENLPLEYSGVELVNAYEALSRADIFLGRVRRRQFYRLWKYASYLMTVGVQQMKEEPKKGFTRYRRPAVWQMLFQLRQKREMTRKILEKIGKYSHLSMRKARTEMFPVIKLLLKELDVDKAATIAAFYEFTKEELEFLVGEKGDEIWKYVEKHGMHRIEDETFLESFVKAEKEEKEESVEEVAEEKPEEEREEPRARKKAGKNLTLDSFFS.

Position 43–50 (43–50 (GPPGVGKT)) interacts with ATP. The tract at residues 441–479 (EEKEESVEEVAEEKPEEEREEPRARKKAGKNLTLDSFFS) is disordered. The segment covering 452–463 (EEKPEEEREEPR) has biased composition (basic and acidic residues).

It belongs to the activator 1 small subunits family. RfcL subfamily. Heteropentamer composed of four small subunits (RfcS) and one large subunit (RfcL). Both subunits interact with PCNA.

Functionally, part of the RFC clamp loader complex which loads the PCNA sliding clamp onto DNA. The complex possesses DNA-dependent ATPase activity which is further stimulated by PCNA. This Archaeoglobus fulgidus (strain ATCC 49558 / DSM 4304 / JCM 9628 / NBRC 100126 / VC-16) protein is Replication factor C large subunit (rfcL).